A 635-amino-acid chain; its full sequence is Glutamine sensor PIB2 (635 aa).

Positions 1–110 (MTALHSVSKT…GTGFVDRKQQ (110 aa)) are disordered. Positions 1 to 164 (MTALHSVSKT…KTLPFTDDQR (164 aa)) are may play a role in attenuating TORC1 signaling. Over residues 33 to 44 (RNHDYRGRKGDE) the composition is skewed to basic and acidic residues. Phosphoserine is present on residues serine 46 and serine 53. Threonine 56 carries the phosphothreonine modification. Over residues 67 to 85 (STHSEQSILSSISLKSMVN) the composition is skewed to polar residues. Phosphoserine is present on residues serine 73, serine 113, serine 124, serine 148, serine 165, and serine 174. 2 disordered regions span residues 123–181 (NSAE…VSRG) and 224–254 (SSNL…TSKV). Low complexity predominate over residues 238 to 254 (SSSSSTSSVSSSSTSKV). A phosphoserine mark is found at serine 300, serine 309, and serine 381. Residues 304–440 (LPQPASSTNL…PTISNRNSAR (137 aa)) form a required for interaction with TORC1 region. Residues 452 to 527 (DSKRNSCRYC…ICDDCLVEYE (76 aa)) form an FYVE-type; atypical zinc finger. Zn(2+)-binding residues include cysteine 458, cysteine 461, cysteine 474, cysteine 477, cysteine 482, histidine 485, cysteine 519, and cysteine 522. Disordered regions lie at residues 534–557 (HNAN…DNRK) and 570–623 (ALFR…GSVI). 2 stretches are compositionally biased toward acidic residues: residues 543–553 (INVEEGEDDDN) and 601–616 (EEAD…EEGN). The interval 620 to 635 (GSVIGSVPANWNWSSF) is may be required for TORC1 activation.

In terms of assembly, interacts with the TORC1 complex when activated by glutamine or cysteine. Interacts with TOR1; glutamine enhances the interaction. Interacts with KOG1; glutamine enhances the interaction. Interacts with TCO89. Interacts with LST8; glutamine enhances the interaction. Interacts with TOR2; glutamine enhances the interaction.

It localises to the vacuole membrane. Activated by glutamine. May also be activated by cysteine. Functions as an intracellular glutamine sensor that directly activates the TORC1 signaling pathway, to promote cell growth when glutamine is available. May play a role in repressing NPR1 activity independently of TORC1 signaling. In Saccharomyces cerevisiae (strain ATCC 204508 / S288c) (Baker's yeast), this protein is Glutamine sensor PIB2.